A 468-amino-acid polypeptide reads, in one-letter code: 3-isopropylmalate dehydratase large subunit (468 aa).

Residues Cys347, Cys408, and Cys411 each coordinate [4Fe-4S] cluster.

The protein belongs to the aconitase/IPM isomerase family. LeuC type 1 subfamily. As to quaternary structure, heterodimer of LeuC and LeuD. It depends on [4Fe-4S] cluster as a cofactor.

It catalyses the reaction (2R,3S)-3-isopropylmalate = (2S)-2-isopropylmalate. The protein operates within amino-acid biosynthesis; L-leucine biosynthesis; L-leucine from 3-methyl-2-oxobutanoate: step 2/4. Functionally, catalyzes the isomerization between 2-isopropylmalate and 3-isopropylmalate, via the formation of 2-isopropylmaleate. This is 3-isopropylmalate dehydratase large subunit from Janthinobacterium sp. (strain Marseille) (Minibacterium massiliensis).